A 473-amino-acid chain; its full sequence is 7-dehydrocholesterol reductase (473 aa).

Residues 1–20 (MGERRRANASRGDKKVANGE) form a disordered region. The next 6 helical transmembrane spans lie at 36–56 (FSLA…YYFV), 97–117 (IYLA…DILH), 175–195 (WIPL…FALV), 264–284 (VTNS…DFFW), 304–324 (LGWG…LYLV), and 329–349 (ELST…YYIF). Residues K356, R360, M393, W398, and 405 to 406 (NY) each bind NADP(+). Residues 419 to 439 (ACGFDHLLPYFYFIYMTILLV) form a helical membrane-spanning segment. NADP(+) is bound by residues D445, 449–453 (CSSKY), and Y460.

This sequence belongs to the ERG4/ERG24 family.

It localises to the endoplasmic reticulum membrane. It catalyses the reaction cholesterol + NADP(+) = 7-dehydrocholesterol + NADPH + H(+). The catalysed reaction is 7-dehydrodesmosterol + NADPH + H(+) = desmosterol + NADP(+). It participates in steroid biosynthesis; cholesterol biosynthesis. In terms of biological role, catalyzes the last step of the cholesterol synthesis pathway, which transforms cholesta-5,7-dien-3beta-ol (7-dehydrocholesterol,7-DHC) into cholesterol by reducing the C7-C8 double bond of its sterol core. Can also metabolize cholesta-5,7,24-trien-3beta-ol (7-dehydrodemosterol, 7-DHD) to desmosterol, which is then metabolized by the Delta(24)-sterol reductase (DHCR24) to cholesterol. Modulates ferroptosis (a form of regulated cell death driven by iron-dependent lipid peroxidation) through the metabolic breakdown of the anti-ferroptotic metabolites 7-DHC and 7-DHD which, when accumulated, divert the propagation of peroxyl radical-mediated damage from phospholipid components to its sterol core, protecting plasma and mitochondrial membranes from phospholipid autoxidation. The chain is 7-dehydrocholesterol reductase (dhcr7) from Xenopus laevis (African clawed frog).